The following is a 1488-amino-acid chain: Neuropathy target esterase sws (1488 aa).

The Lumenal portion of the chain corresponds to 1 to 34 (MDVLELLRASVNGCYNTLFSDAWSQYVSKQIATT). The chain crosses the membrane as a helical span at residues 35-55 (TYWYGALLAIGALFIAWFLYF). Over 56-1488 (KRLASLRLRD…ENVTEADTKN (1433 aa)) the chain is Cytoplasmic. 175–302 (IFGHFEKPIF…IRVIQVIMIR (128 aa)) lines the a nucleoside 3',5'-cyclic phosphate pocket. 2 disordered regions span residues 339 to 379 (PGPV…DPNP) and 402 to 440 (QQQQ…ATIT). Low complexity-rich tracts occupy residues 344–356 (SQAS…MASR) and 402–413 (QQQQSSGVSVGG). Positions 415–424 (HRSSGACTPT) are enriched in polar residues. Residues 458–587 (ELGL…VVRR) and 576–703 (IVLD…LSHR) contribute to the a nucleoside 3',5'-cyclic phosphate site. Residues 929 to 1095 (LVLGGGGARG…VNNLPGHLWR (167 aa)) form the PNPLA domain. The short motif at 933–938 (GGGARG) is the GXGXXG element. Residues 960–964 (GVSIG) carry the GXSXG motif. The active-site Nucleophile is the Ser-962. The Proton acceptor role is filled by Asp-1082. Positions 1082-1084 (DGG) match the DGA/G motif. Phosphoserine is present on Ser-1176. Disordered stretches follow at residues 1348-1376 (RKVD…QGNL) and 1398-1488 (EHKR…DTKN). Basic residues predominate over residues 1399-1410 (HKRRQKSKHKRD). Basic and acidic residues predominate over residues 1440–1452 (IDAKLDQLRKLQQ). Over residues 1456–1470 (QGNESEQEQEQEQEQ) the composition is skewed to acidic residues.

Belongs to the NTE family. As to quaternary structure, interacts with Pka-C3; interaction inhibits the catalytic function of Pka-C3 and the esterase activity of sws.

It is found in the endoplasmic reticulum membrane. The enzyme catalyses a 1-acyl-sn-glycero-3-phosphocholine + H2O = sn-glycerol 3-phosphocholine + a fatty acid + H(+). Functionally, phospholipase B that deacylates intracellular phosphatidylcholine (PtdCho), generating glycerophosphocholine (GroPtdCho). This deacylation occurs at both sn-2 and sn-1 positions of PtdCho. Its specific chemical modification by certain organophosphorus (OP) compounds leads to distal axonopathy. Plays a role in the signaling mechanism between neurons and glia that regulates glia wrapping during development of the adult brain. Essential for membrane lipid homeostasis and cell survival in both neurons and glia of the adult brain. This Drosophila mojavensis (Fruit fly) protein is Neuropathy target esterase sws.